The chain runs to 350 residues: Biotin synthase (350 aa).

The region spanning 41–268 is the Radical SAM core domain; sequence NEVQISRLLS…LSRVRLSAGR (228 aa). [4Fe-4S] cluster is bound by residues Cys-56, Cys-60, and Cys-63. The [2Fe-2S] cluster site is built by Cys-100, Cys-131, Cys-191, and Arg-263.

Belongs to the radical SAM superfamily. Biotin synthase family. In terms of assembly, homodimer. Requires [4Fe-4S] cluster as cofactor. The cofactor is [2Fe-2S] cluster.

The enzyme catalyses (4R,5S)-dethiobiotin + (sulfur carrier)-SH + 2 reduced [2Fe-2S]-[ferredoxin] + 2 S-adenosyl-L-methionine = (sulfur carrier)-H + biotin + 2 5'-deoxyadenosine + 2 L-methionine + 2 oxidized [2Fe-2S]-[ferredoxin]. The protein operates within cofactor biosynthesis; biotin biosynthesis; biotin from 7,8-diaminononanoate: step 2/2. In terms of biological role, catalyzes the conversion of dethiobiotin (DTB) to biotin by the insertion of a sulfur atom into dethiobiotin via a radical-based mechanism. The polypeptide is Biotin synthase (Shewanella putrefaciens (strain CN-32 / ATCC BAA-453)).